A 150-amino-acid polypeptide reads, in one-letter code: Transcriptional regulator MraZ (150 aa).

SpoVT-AbrB domains follow at residues 6–52 and 80–126; these read EFFN…PYQE and AVEC…NRTK.

It belongs to the MraZ family. As to quaternary structure, forms oligomers.

It is found in the cytoplasm. Its subcellular location is the nucleoid. This Syntrophotalea carbinolica (strain DSM 2380 / NBRC 103641 / GraBd1) (Pelobacter carbinolicus) protein is Transcriptional regulator MraZ.